The sequence spans 444 residues: Sonic hedgehog protein (444 aa).

An N-terminal signal peptide occupies residues 1–24; it reads MLVATQSLLLLSFICTLVTPPGLA. A lipid anchor (N-palmitoyl cysteine) is attached at cysteine 25. Residues 33 to 39 carry the Cardin-Weintraub motif; that stretch reads KRRHPKK. Glutamate 90, glutamate 91, aspartate 96, threonine 126, glutamate 127, aspartate 130, and aspartate 132 together coordinate Ca(2+). Zn(2+) is bound by residues histidine 141, aspartate 148, and histidine 183. Glycine 198 carries Cholesterol glycine ester lipidation. 3 tandem repeats follow at residues 386–393, 394–401, and 403–409. Positions 386 to 409 are 3 X 8 AA tandem repeats of Q-V-D-L-Q-S-H-H; that stretch reads QVDLQSHHQVDLQSHHQVDLQSHH.

The protein belongs to the hedgehog family. In terms of assembly, interacts with HHATL/GUP1 which negatively regulates HHAT-mediated palmitoylation of the SHH N-terminus. Interacts with BOC and CDON. Interacts with HHIP. Interacts with DISP1 via its cholesterol anchor. Interacts with SCUBE2. Multimer. In terms of processing, the C-terminal domain displays an autoproteolysis activity and a cholesterol transferase activity. Both activities result in the cleavage of the full-length protein and covalent attachment of a cholesterol moiety to the C-terminal of the newly generated N-terminal fragment (ShhN). Cholesterylation is required for the sonic hedgehog protein N-product targeting to lipid rafts and multimerization. ShhN is the active species in both local and long-range signaling, whereas the C-product (ShhC) is degraded in the reticulum endoplasmic. N-palmitoylation by HHAT of ShhN is required for sonic hedgehog protein N-product multimerization and full activity. It is a prerequisite for the membrane-proximal positioning and the subsequent shedding of this N-terminal peptide. Post-translationally, the lipidated N- and C-terminal peptides of ShhNp can be cleaved (shedding). The N-terminal palmitoylated peptide is cleaved at the Cardin-Weintraub (CW) motif site. The cleavage reduced the interactions with heparan sulfate. The cleavage is enhanced by SCUBE2. Strongly expressed in notochord and neural floor plate during embryogenesis. In tadpole, high expression is observed in pancreas/stomach, moderate expression in tail, and low expression in intestine, brain, and hind limb.

Its subcellular location is the endoplasmic reticulum membrane. It is found in the golgi apparatus membrane. The protein resides in the cell membrane. It carries out the reaction glycyl-L-cysteinyl-[protein] + cholesterol + H(+) = [protein]-C-terminal glycyl cholesterol ester + N-terminal L-cysteinyl-[protein]. Functionally, the C-terminal part of the sonic hedgehog protein precursor displays an autoproteolysis and a cholesterol transferase activity. Both activities result in the cleavage of the full-length protein into two parts (ShhN and ShhC) followed by the covalent attachment of a cholesterol moiety to the C-terminal of the newly generated ShhN. Both activities occur in the endoplasmic reticulum. Once cleaved, ShhC is degraded in the endoplasmic reticulum. In terms of biological role, the dually lipidated sonic hedgehog protein N-product (ShhNp) is a morphogen which is essential for a variety of patterning events during development. Induces ventral cell fate in the neural tube and somites. Involved in the patterning of the anterior-posterior axis of the developing limb bud. Essential for axon guidance. Binds to the patched (PTCH1) receptor, which functions in association with smoothened (SMO), to activate the transcription of target genes. In the absence of SHH, PTCH1 represses the constitutive signaling activity of SMO. This Xenopus laevis (African clawed frog) protein is Sonic hedgehog protein.